Consider the following 118-residue polypeptide: Class II hydrophobin CRP (118 aa).

The N-terminal stretch at 1–22 (MQFSIIAISFLASLAMASPAKR) is a signal peptide. Residues 20–46 (AKRGGGGGGSGSGSGSGSGSGSGGGST) are disordered. Over residues 22 to 45 (RGGGGGGSGSGSGSGSGSGSGGGS) the composition is skewed to gly residues. 7 tandem repeats follow at residues 29 to 30 (SG), 31 to 32 (SG), 33 to 34 (SG), 35 to 36 (SG), 37 to 38 (SG), 39 to 40 (SG), and 41 to 42 (SG). The 7 X 2 AA tandem repeats of S-G stretch occupies residues 29 to 42 (SGSGSGSGSGSGSG). 4 cysteine pairs are disulfide-bonded: Cys51–Cys100, Cys61–Cys91, Cys62–Cys74, and Cys101–Cys112.

It belongs to the cerato-ulmin hydrophobin family. Homotetramer. Further self-assembles to form highly ordered films at water-air interfaces through intermolecular interactions.

The protein localises to the secreted. It is found in the cell wall. Aerial growth, conidiation, and dispersal of filamentous fungi in the environment rely upon a capability of their secreting small amphipathic proteins called hydrophobins (HPBs) with low sequence identity. Class I can self-assemble into an outermost layer of rodlet bundles on aerial cell surfaces, conferring cellular hydrophobicity that supports fungal growth, development and dispersal; whereas Class II form highly ordered films at water-air interfaces through intermolecular interactions but contribute nothing to the rodlet structure. Cryparin is a class II hydrophobin that is the most abundant protein produced by this fungus when grown in liquid culture and that plays an essential role in the fitness of this important plant pathogen by facilitating the eruption of the fungal fruiting bodies through the bark of its host tree. This Cryphonectria parasitica (Chestnut blight fungus) protein is Class II hydrophobin CRP.